The sequence spans 289 residues: Probable phosphoribulokinase (289 aa).

Residue G12–T20 participates in ATP binding.

It belongs to the phosphoribulokinase family.

The catalysed reaction is D-ribulose 5-phosphate + ATP = D-ribulose 1,5-bisphosphate + ADP + H(+). The protein is Probable phosphoribulokinase (prkB) of Escherichia coli (strain K12).